The following is a 470-amino-acid chain: Glutamate--tRNA ligase 1 (470 aa).

The 'HIGH' region motif lies at Pro8–Gly18. Residues Lys250 to Arg254 carry the 'KMSKS' region motif. Lys253 is an ATP binding site.

This sequence belongs to the class-I aminoacyl-tRNA synthetase family. Glutamate--tRNA ligase type 1 subfamily. Monomer.

The protein localises to the cytoplasm. The enzyme catalyses tRNA(Glu) + L-glutamate + ATP = L-glutamyl-tRNA(Glu) + AMP + diphosphate. Functionally, catalyzes the attachment of glutamate to tRNA(Glu) in a two-step reaction: glutamate is first activated by ATP to form Glu-AMP and then transferred to the acceptor end of tRNA(Glu). In Pseudothermotoga lettingae (strain ATCC BAA-301 / DSM 14385 / NBRC 107922 / TMO) (Thermotoga lettingae), this protein is Glutamate--tRNA ligase 1.